We begin with the raw amino-acid sequence, 261 residues long: Triosephosphate isomerase (261 aa).

10–12 (NWK) contributes to the substrate binding site. His-100 functions as the Electrophile in the catalytic mechanism. Glu-172 functions as the Proton acceptor in the catalytic mechanism. Substrate is bound by residues Gly-178, Ser-218, and 239–240 (GG).

This sequence belongs to the triosephosphate isomerase family. As to quaternary structure, homodimer.

It localises to the cytoplasm. The enzyme catalyses D-glyceraldehyde 3-phosphate = dihydroxyacetone phosphate. It functions in the pathway carbohydrate biosynthesis; gluconeogenesis. The protein operates within carbohydrate degradation; glycolysis; D-glyceraldehyde 3-phosphate from glycerone phosphate: step 1/1. Involved in the gluconeogenesis. Catalyzes stereospecifically the conversion of dihydroxyacetone phosphate (DHAP) to D-glyceraldehyde-3-phosphate (G3P). In Mycobacterium avium (strain 104), this protein is Triosephosphate isomerase.